Reading from the N-terminus, the 333-residue chain is Ketol-acid reductoisomerase (NADP(+)) (333 aa).

A KARI N-terminal Rossmann domain is found at T6 to T186. Residues Y29 to Q32, K52, S55, S57, and D87 to Q90 contribute to the NADP(+) site. H112 is an active-site residue. NADP(+) is bound at residue G138. The KARI C-terminal knotted domain occupies T187–S332. Mg(2+) contacts are provided by D195, E199, E231, and E235. Residue S256 participates in substrate binding.

Belongs to the ketol-acid reductoisomerase family. The cofactor is Mg(2+).

The catalysed reaction is (2R)-2,3-dihydroxy-3-methylbutanoate + NADP(+) = (2S)-2-acetolactate + NADPH + H(+). The enzyme catalyses (2R,3R)-2,3-dihydroxy-3-methylpentanoate + NADP(+) = (S)-2-ethyl-2-hydroxy-3-oxobutanoate + NADPH + H(+). It functions in the pathway amino-acid biosynthesis; L-isoleucine biosynthesis; L-isoleucine from 2-oxobutanoate: step 2/4. The protein operates within amino-acid biosynthesis; L-valine biosynthesis; L-valine from pyruvate: step 2/4. Functionally, involved in the biosynthesis of branched-chain amino acids (BCAA). Catalyzes an alkyl-migration followed by a ketol-acid reduction of (S)-2-acetolactate (S2AL) to yield (R)-2,3-dihydroxy-isovalerate. In the isomerase reaction, S2AL is rearranged via a Mg-dependent methyl migration to produce 3-hydroxy-3-methyl-2-ketobutyrate (HMKB). In the reductase reaction, this 2-ketoacid undergoes a metal-dependent reduction by NADPH to yield (R)-2,3-dihydroxy-isovalerate. This is Ketol-acid reductoisomerase (NADP(+)) from Tropheryma whipplei (strain Twist) (Whipple's bacillus).